Reading from the N-terminus, the 266-residue chain is Indole-3-glycerol phosphate synthase (266 aa).

It belongs to the TrpC family.

It catalyses the reaction 1-(2-carboxyphenylamino)-1-deoxy-D-ribulose 5-phosphate + H(+) = (1S,2R)-1-C-(indol-3-yl)glycerol 3-phosphate + CO2 + H2O. Its pathway is amino-acid biosynthesis; L-tryptophan biosynthesis; L-tryptophan from chorismate: step 4/5. The chain is Indole-3-glycerol phosphate synthase from Variovorax paradoxus (strain S110).